Consider the following 259-residue polypeptide: Probable ABC transporter permease protein RC0129 (259 aa).

The next 5 membrane-spanning stretches (helical) occupy residues 13 to 35, 49 to 69, 148 to 168, 195 to 215, and 237 to 257; these read TVKF…SSII, LFIG…SGAV, VITA…IGVM, PIDV…ISII, and AVVN…ELFF.

This sequence belongs to the MlaE permease family.

It is found in the cell inner membrane. Its function is as follows. Could be part of an ABC transporter complex. The chain is Probable ABC transporter permease protein RC0129 from Rickettsia conorii (strain ATCC VR-613 / Malish 7).